The following is a 158-amino-acid chain: MATVDHREAGQDDPESEDEVYEVVDLTEYARRHQWWSRVFGSNSGPIAEKYSVTTQLVMGGLTGWCAGYLFQRVGKIAATAVGGGFLLLQIANHSGYVQVDWKKVEKDVNKAKKRLKKKANKAVPEINTLIEEATDFIKKNIVLSGGFVGGFLLGLAS.

The short motif at 21-24 (YEVV) is the YXXL element. A run of 2 helical transmembrane segments spans residues 51–70 (YSVTTQLVMGGLTGWCAGYL) and 77–98 (IAATAVGGGFLLLQIANHSGYV).

The protein belongs to the FUN14 family.

It is found in the mitochondrion outer membrane. Its function is as follows. Acts as an activator of hypoxia-induced mitophagy, an important mechanism for mitochondrial quality control. The protein is FUN14 domain-containing protein 1 (fundc1) of Tetraodon nigroviridis (Spotted green pufferfish).